A 98-amino-acid polypeptide reads, in one-letter code: Integration host factor subunit beta (98 aa).

It belongs to the bacterial histone-like protein family. In terms of assembly, heterodimer of an alpha and a beta chain.

This protein is one of the two subunits of integration host factor, a specific DNA-binding protein that functions in genetic recombination as well as in transcriptional and translational control. In Pseudomonas fluorescens (strain SBW25), this protein is Integration host factor subunit beta.